Consider the following 149-residue polypeptide: Large ribosomal subunit protein bL9 (149 aa).

This sequence belongs to the bacterial ribosomal protein bL9 family.

In terms of biological role, binds to the 23S rRNA. This Aquifex aeolicus (strain VF5) protein is Large ribosomal subunit protein bL9.